The following is a 241-amino-acid chain: Uridylate kinase (241 aa).

Residue 14–17 (KLSG) participates in ATP binding. Residue glycine 56 participates in UMP binding. Residues glycine 57 and arginine 61 each coordinate ATP. Residues aspartate 77 and 138–145 (TGNPFFTT) each bind UMP. ATP-binding residues include threonine 165, tyrosine 171, and aspartate 174.

The protein belongs to the UMP kinase family. In terms of assembly, homohexamer.

The protein localises to the cytoplasm. The enzyme catalyses UMP + ATP = UDP + ADP. It functions in the pathway pyrimidine metabolism; CTP biosynthesis via de novo pathway; UDP from UMP (UMPK route): step 1/1. With respect to regulation, inhibited by UTP. Functionally, catalyzes the reversible phosphorylation of UMP to UDP. The sequence is that of Uridylate kinase from Psychrobacter cryohalolentis (strain ATCC BAA-1226 / DSM 17306 / VKM B-2378 / K5).